Reading from the N-terminus, the 2488-residue chain is Neuron navigator 2 (2488 aa).

Residues 85–192 form the Calponin-homology (CH) domain; the sequence is GFDTQIYTDW…LFFSLSRYKQ (108 aa). Low complexity-rich tracts occupy residues 194–204, 221–247, and 255–267; these read QQQPQKQHLSS, QAGT…PHQQ, and QSSA…SQSK. 2 disordered regions span residues 194 to 675 and 706 to 727; these read QQQP…GSNT and TEGN…SHFT. The segment covering 299 to 315 has biased composition (polar residues); the sequence is GGSTTANNRRSQSFNNY. The segment covering 356-369 has biased composition (low complexity); that stretch reads SGSSSTPTNCSTSS. Residues 384-396 show a composition bias toward polar residues; it reads KSLSVKHSATVSM. Residues 401 to 410 are compositionally biased toward pro residues; sequence PPGPEAPRPT. Polar residues predominate over residues 492 to 506; sequence RTFSRALTNKKSSLK. Residues 498–531 adopt a coiled-coil conformation; that stretch reads LTNKKSSLKGNEKEKEKQQREKDKEKSKDLAKRA. The span at 507-547 shows a compositional bias: basic and acidic residues; that stretch reads GNEKEKEKQQREKDKEKSKDLAKRASVTERLDLKEEPKEDP. The span at 592 to 606 shows a compositional bias: low complexity; it reads MKSMPGKSPSAPAPS. The span at 615-626 shows a compositional bias: polar residues; it reads GKLSSGLPQQKP. Low complexity-rich tracts occupy residues 633-642 and 657-675; these read SSSSSSLASS and SSQT…GSNT. Over residues 706–719 the composition is skewed to polar residues; it reads TEGNVTAESSSTGV. Residues 743–771 are a coiled coil; that stretch reads EARRLRTVKNIADLRQNLEETMSSLRGTQ. 9 disordered regions span residues 804-824, 939-1151, 1177-1200, 1213-1283, 1295-1338, 1355-1412, 1440-1460, 1473-1560, and 1591-1629; these read LSWR…PSMG, LGLG…QSGS, KSSA…NQDD, YRSL…SDNE, PAAQ…PIAT, MTQQ…TNAS, SLSS…ASSK, VKTT…VTSP, and SLSN…SFRD. Over residues 939–985 the composition is skewed to low complexity; that stretch reads LGLGDADSWDDSSSVSSGISDTIDNLSTDDINTSSSISSYANTPASS. Positions 1091 to 1102 are enriched in basic and acidic residues; sequence KTDDAKVSEKGR. Residues 1130-1142 show a composition bias toward polar residues; that stretch reads PSSSRTPTANANS. A compositionally biased stretch (low complexity) spans 1220 to 1245; the sequence is SKSNSRNGAGNRSSTSSIDSNISSKS. Residues 1299–1309 show a composition bias toward polar residues; sequence PVSSPAQTSLQ. 2 stretches are compositionally biased toward low complexity: residues 1363–1380 and 1388–1404; these read SPSG…PLYS and SPLA…PSNS. Residues 1440–1456 are compositionally biased toward polar residues; sequence SLSSGGVPSHNSSTGLI. The span at 1477–1489 shows a compositional bias: low complexity; sequence LSESPLSSPAASP. A phosphoserine mark is found at Ser1480, Ser1484, and Ser1488. 2 stretches are compositionally biased toward basic and acidic residues: residues 1498–1510 and 1526–1535; these read RKQD…DRNT and TQEDAKEWLR. A compositionally biased stretch (low complexity) spans 1549–1560; that stretch reads SPFSSGSSVTSP. Positions 1686-1773 form a coiled coil; the sequence is EEKCQSEIRK…AAAQAAINGV (88 aa). Disordered stretches follow at residues 1790–1887 and 1951–1985; these read ADLR…LRNS and AEND…MGLS. Composition is skewed to polar residues over residues 1800–1820, 1875–1887, and 1959–1985; these read SDSV…SNIE, NGST…LRNS, and ESQG…MGLS. A coiled-coil region spans residues 1897–1964; it reads MDSEAETVMQ…RLKSESQGSG (68 aa). A Phosphoserine modification is found at Ser1977. 2157–2164 lines the ATP pocket; it reads GPSGTGKT. Positions 2423–2488 are disordered; it reads DGYSMPREGS…ILDSSLESTL (66 aa). Residues 2460-2473 show a composition bias toward low complexity; sequence YSSPQSYDSDSNSN.

The protein belongs to the Nav/unc-53 family. As to expression, highly expressed in the brain, kidney and liver. Also expressed in the thyroid, mammary gland, spinal cord, heart, placenta and lung. Abundantly expressed in colon cancers.

The protein localises to the nucleus. The enzyme catalyses ATP + H2O = ADP + phosphate + H(+). Its function is as follows. Possesses 3' to 5' helicase activity and exonuclease activity. Involved in neuronal development, specifically in the development of different sensory organs. The protein is Neuron navigator 2 (NAV2) of Homo sapiens (Human).